Consider the following 156-residue polypeptide: Snaclec A4 (156 aa).

An N-terminal signal peptide occupies residues 1 to 23; sequence MGRSISVSFGLLVVFLSLSGTGA. Cysteine 27 and cysteine 38 are oxidised to a cystine. The region spanning 34–155 is the C-type lectin domain; that stretch reads HEGHCYKVFN…CGQPYRFTCE (122 aa). Residue asparagine 45 is glycosylated (N-linked (GlcNAc...) asparagine). 2 disulfides stabilise this stretch: cysteine 55-cysteine 154 and cysteine 129-cysteine 146.

This sequence belongs to the snaclec family. In terms of assembly, heterodimer; disulfide-linked. As to expression, expressed by the venom gland.

The protein localises to the secreted. Functionally, interferes with one step of hemostasis (modulation of platelet aggregation, or coagulation cascade, for example). This Macrovipera lebetinus (Levantine viper) protein is Snaclec A4.